The primary structure comprises 462 residues: Protoheme IX farnesyltransferase, mitochondrial (462 aa).

7 helical membrane-spanning segments follow: residues 152–172, 173–193, 237–257, 269–289, 296–316, 348–368, and 411–431; these read LTILVTLSSICSYAISPYTVS, LPELLFLTMGTALCSGAANAI, MLFLGVNPTVSFLGFLNIVLY, IINTWVGAIVGAIPPLMGWAA, PGAWCLAGLLYAWQFPHFNAL, SLLMFPLCFGLSYFGITDWVF, and AKKLFWGSVWHLPAVLILAML.

This sequence belongs to the UbiA prenyltransferase family.

Its subcellular location is the mitochondrion membrane. Functionally, converts protoheme IX and farnesyl diphosphate to heme O. This Debaryomyces hansenii (strain ATCC 36239 / CBS 767 / BCRC 21394 / JCM 1990 / NBRC 0083 / IGC 2968) (Yeast) protein is Protoheme IX farnesyltransferase, mitochondrial (COX10).